The chain runs to 441 residues: Amino-acid acetyltransferase (441 aa).

Positions 295–434 constitute an N-acetyltransferase domain; that stretch reads EQVRRATIND…QELYNYQRRS (140 aa).

It belongs to the acetyltransferase family. ArgA subfamily. Homohexamer.

The protein resides in the cytoplasm. It catalyses the reaction L-glutamate + acetyl-CoA = N-acetyl-L-glutamate + CoA + H(+). It functions in the pathway amino-acid biosynthesis; L-arginine biosynthesis; N(2)-acetyl-L-ornithine from L-glutamate: step 1/4. The protein is Amino-acid acetyltransferase of Yersinia pseudotuberculosis serotype O:1b (strain IP 31758).